A 30-amino-acid chain; its full sequence is ASAAGAVRAGDDETLLKPVLNSLDNLVSGL.

Leucine amide is present on L30.

As to expression, expressed by the skin dorsal glands.

It localises to the secreted. Its function is as follows. Lacks antimicrobial activity. Does not inhibit the formation of NO by neuronal nitric oxide. This chain is Rothein 3.1, found in Litoria rothii (Roth's tree frog).